Here is a 445-residue protein sequence, read N- to C-terminus: MTTILPNLPTGQKVGIAFSGGLDTSAALLWMRQKGAVPYAYTANLGQPDEPDYDEIPRRAMQYGAEAARLVDCRAQLVAEGIAALQAGAFHISTAGLTYFNTTPIGRAVTGTMLVAAMKEDGVNIWGDGSTFKGNDIERFYRYGLLTNPDLKIYKPWLDQTFIDELGGRAEMSEYMRQAGFDYKMSAEKAYSTDSNMLGATHEAKDLELLSAGIRIVQPIMGVAFWQDSVQIKAEEVTVRFEEGQPVALNGVEYADPVELLLEANRIGGRHGLGMSDQIENRIIEAKSRGIYEAPGLALLFIAYERLVTGIHNEDTIEQYRENGRKLGRLLYQGRWFDPQAIMLRETAQRWVARAITGEVTLELRRGNDYSLLNTESANLTYAPERLSMEKVENAPFTPADRIGQLTMRNLDIVDTREKLFTYVKTGLLAPSAGSALPQIKDGKK.

Residues 17 to 25 (AFSGGLDTS) and alanine 43 each bind ATP. Tyrosine 99 is a binding site for L-citrulline. Residues glycine 129 and threonine 131 each contribute to the ATP site. Residues threonine 131, asparagine 135, and aspartate 136 each coordinate L-aspartate. Asparagine 135 lines the L-citrulline pocket. An ATP-binding site is contributed by aspartate 136. The L-citrulline site is built by arginine 139 and serine 192. Aspartate 194 provides a ligand contact to ATP. 3 residues coordinate L-citrulline: threonine 201, glutamate 203, and glutamate 280.

The protein belongs to the argininosuccinate synthase family. Type 2 subfamily. Homotetramer.

The protein resides in the cytoplasm. The enzyme catalyses L-citrulline + L-aspartate + ATP = 2-(N(omega)-L-arginino)succinate + AMP + diphosphate + H(+). It functions in the pathway amino-acid biosynthesis; L-arginine biosynthesis; L-arginine from L-ornithine and carbamoyl phosphate: step 2/3. The chain is Argininosuccinate synthase from Bordetella pertussis (strain Tohama I / ATCC BAA-589 / NCTC 13251).